A 756-amino-acid chain; its full sequence is 5-methyltetrahydropteroyltriglutamate--homocysteine methyltransferase (756 aa).

5-methyltetrahydropteroyltri-L-glutamate-binding positions include 15–18 and Lys-111; that span reads REWK. The disordered stretch occupies residues 392–411; sequence GAATSHNLENKKRPQSFNER. Residues 399–411 show a composition bias toward basic and acidic residues; sequence LENKKRPQSFNER. L-homocysteine-binding positions include 429–431 and Glu-482; that span reads IGS. L-methionine-binding positions include 429-431 and Glu-482; that span reads IGS. Residues 513–514 and Trp-559 contribute to the 5-methyltetrahydropteroyltri-L-glutamate site; that span reads RC. Asp-597 is a binding site for L-homocysteine. Asp-597 contributes to the L-methionine binding site. Glu-603 contributes to the 5-methyltetrahydropteroyltri-L-glutamate binding site. His-639, Cys-641, and Glu-663 together coordinate Zn(2+). The Proton donor role is filled by His-692. Cys-724 serves as a coordination point for Zn(2+).

Belongs to the vitamin-B12 independent methionine synthase family. Zn(2+) serves as cofactor.

The enzyme catalyses 5-methyltetrahydropteroyltri-L-glutamate + L-homocysteine = tetrahydropteroyltri-L-glutamate + L-methionine. It functions in the pathway amino-acid biosynthesis; L-methionine biosynthesis via de novo pathway; L-methionine from L-homocysteine (MetE route): step 1/1. Functionally, catalyzes the transfer of a methyl group from 5-methyltetrahydrofolate to homocysteine resulting in methionine formation. The chain is 5-methyltetrahydropteroyltriglutamate--homocysteine methyltransferase from Halalkalibacterium halodurans (strain ATCC BAA-125 / DSM 18197 / FERM 7344 / JCM 9153 / C-125) (Bacillus halodurans).